The sequence spans 83 residues: Short neurotoxin VAN-29 (83 aa).

Residues methionine 1–threonine 21 form the signal peptide. 4 disulfides stabilise this stretch: cysteine 24/cysteine 45, cysteine 38/cysteine 62, cysteine 64/cysteine 75, and cysteine 76/cysteine 81.

The protein belongs to the three-finger toxin family. Short-chain subfamily. Type I alpha-neurotoxin sub-subfamily. As to expression, expressed by the venom gland.

Its subcellular location is the secreted. Its function is as follows. Binds to muscle nicotinic acetylcholine receptor (nAChR) and inhibit acetylcholine from binding to the receptor, thereby impairing neuromuscular transmission. The polypeptide is Short neurotoxin VAN-29 (Laticauda laticaudata (Blue-ringed sea krait)).